The sequence spans 429 residues: Formate-dependent phosphoribosylglycinamide formyltransferase (429 aa).

Residues 26-27 (EL) and E86 contribute to the N(1)-(5-phospho-beta-D-ribosyl)glycinamide site. ATP is bound by residues R118, K159, 199-202 (EEHI), and E207. The ATP-grasp domain maps to 123–319 (ETLVKEAKVP…EFGLHLRAVL (197 aa)). Residues E276 and E288 each coordinate Mg(2+). N(1)-(5-phospho-beta-D-ribosyl)glycinamide is bound by residues D295, K375, and 382-383 (RR).

It belongs to the PurK/PurT family. As to quaternary structure, homodimer.

It catalyses the reaction N(1)-(5-phospho-beta-D-ribosyl)glycinamide + formate + ATP = N(2)-formyl-N(1)-(5-phospho-beta-D-ribosyl)glycinamide + ADP + phosphate + H(+). The protein operates within purine metabolism; IMP biosynthesis via de novo pathway; N(2)-formyl-N(1)-(5-phospho-D-ribosyl)glycinamide from N(1)-(5-phospho-D-ribosyl)glycinamide (formate route): step 1/1. Involved in the de novo purine biosynthesis. Catalyzes the transfer of formate to 5-phospho-ribosyl-glycinamide (GAR), producing 5-phospho-ribosyl-N-formylglycinamide (FGAR). Formate is provided by PurU via hydrolysis of 10-formyl-tetrahydrofolate. In Pyrococcus furiosus (strain ATCC 43587 / DSM 3638 / JCM 8422 / Vc1), this protein is Formate-dependent phosphoribosylglycinamide formyltransferase.